The primary structure comprises 559 residues: Potassium-transporting ATPase potassium-binding subunit (559 aa).

12 helical membrane-spanning segments follow: residues 5–25 (GFLL…PLGV), 63–83 (LLAI…MLLG), 132–152 (GLTV…FALI), 170–190 (LVRI…LLFI), 250–270 (LTNM…CFAF), 283–303 (LLWA…SAEV), 329–349 (VLVS…AVIA), 356–376 (ALGG…FGGV), 379–399 (GLYG…LMIG), 416–436 (MTAL…ALAM), 484–504 (LLAF…MAIA), and 524–544 (GALF…LTFI).

Belongs to the KdpA family. The system is composed of three essential subunits: KdpA, KdpB and KdpC.

It is found in the cell inner membrane. In terms of biological role, part of the high-affinity ATP-driven potassium transport (or Kdp) system, which catalyzes the hydrolysis of ATP coupled with the electrogenic transport of potassium into the cytoplasm. This subunit binds the periplasmic potassium ions and delivers the ions to the membrane domain of KdpB through an intramembrane tunnel. The chain is Potassium-transporting ATPase potassium-binding subunit from Citrobacter koseri (strain ATCC BAA-895 / CDC 4225-83 / SGSC4696).